A 395-amino-acid chain; its full sequence is Chorismate synthase (395 aa).

NADP(+)-binding residues include arginine 40 and arginine 46. Residues 135–137 and 256–257 each bind FMN; these read RAS and QA. Over residues 272–283 the composition is skewed to basic and acidic residues; the sequence is RRGSQAHDEMRP. The interval 272–296 is disordered; that stretch reads RRGSQAHDEMRPGPDGILRSTNRAG. Residues glycine 300, 315-319, and arginine 341 contribute to the FMN site; that span reads KPIST.

It belongs to the chorismate synthase family. As to quaternary structure, homotetramer. The cofactor is FMNH2.

The enzyme catalyses 5-O-(1-carboxyvinyl)-3-phosphoshikimate = chorismate + phosphate. The protein operates within metabolic intermediate biosynthesis; chorismate biosynthesis; chorismate from D-erythrose 4-phosphate and phosphoenolpyruvate: step 7/7. Its function is as follows. Catalyzes the anti-1,4-elimination of the C-3 phosphate and the C-6 proR hydrogen from 5-enolpyruvylshikimate-3-phosphate (EPSP) to yield chorismate, which is the branch point compound that serves as the starting substrate for the three terminal pathways of aromatic amino acid biosynthesis. This reaction introduces a second double bond into the aromatic ring system. This is Chorismate synthase from Rhodococcus jostii (strain RHA1).